The sequence spans 251 residues: MNLISIPAFQDNYIWLLANRQKHCVIVDPGESAPVLATLAQGQYVPQAILLTHHHNDHVGGVADLRHHFPDIPVYGPQETAKKGATVIVNDGDSLTIAGQNYTIIAVPGHTLGHIAYYSSPYLFCGDTLFSAGCGRLLEGTPEQMYASIQRLAQLPDETLICCAHEYTLSNLKFAHAILPADQDIATYQQQIEQLRSKNLPSLPVKLQFERKINVFLRCNDIDLQRKIETTSPPDSLVSVFCELRSRKDSF.

Zn(2+) is bound by residues histidine 53, histidine 55, aspartate 57, histidine 58, histidine 110, aspartate 127, and histidine 165.

Belongs to the metallo-beta-lactamase superfamily. Glyoxalase II family. As to quaternary structure, monomer. Zn(2+) serves as cofactor.

It carries out the reaction an S-(2-hydroxyacyl)glutathione + H2O = a 2-hydroxy carboxylate + glutathione + H(+). It participates in secondary metabolite metabolism; methylglyoxal degradation; (R)-lactate from methylglyoxal: step 2/2. Its function is as follows. Thiolesterase that catalyzes the hydrolysis of S-D-lactoyl-glutathione to form glutathione and D-lactic acid. The protein is Hydroxyacylglutathione hydrolase of Yersinia pestis (strain Pestoides F).